The following is a 467-amino-acid chain: tRNA modification GTPase MnmE (467 aa).

(6S)-5-formyl-5,6,7,8-tetrahydrofolate is bound by residues R30, E92, and R131. In terms of domain architecture, TrmE-type G spans 226 to 388 (GLKVAIIGRP…LEAAILNAVN (163 aa)). N236 lines the K(+) pocket. GTP contacts are provided by residues 236-241 (NVGKSS), 255-261 (TDLPGTT), and 280-283 (DTAG). S240 serves as a coordination point for Mg(2+). K(+) is bound by residues T255, L257, and T260. Mg(2+) is bound at residue T261. K467 contacts (6S)-5-formyl-5,6,7,8-tetrahydrofolate.

This sequence belongs to the TRAFAC class TrmE-Era-EngA-EngB-Septin-like GTPase superfamily. TrmE GTPase family. In terms of assembly, homodimer. Heterotetramer of two MnmE and two MnmG subunits. It depends on K(+) as a cofactor.

The protein resides in the cytoplasm. Exhibits a very high intrinsic GTPase hydrolysis rate. Involved in the addition of a carboxymethylaminomethyl (cmnm) group at the wobble position (U34) of certain tRNAs, forming tRNA-cmnm(5)s(2)U34. The chain is tRNA modification GTPase MnmE from Trichodesmium erythraeum (strain IMS101).